We begin with the raw amino-acid sequence, 894 residues long: MNNEPLRPDPDRLLEQTAAPHRGKLKVFFGACAGVGKTWAMLAEAQRLRAQGLDIVVGVVETHGRKDTAAMLEGLAVLPLKRQAYRGRHISEFDLDAALARRPALILMDELAHSNAPGSRHPKRWQDIEELLEAGIDVFTTVNVQHLESLNDVVSGVTGIQVRETVPDPFFDAADDVVLVDLPPDDLRQRLKEGKVYIAGQAERAIEHFFRKGNLIALRELALRRTADRVDEQMRAWRGHPGEEKVWHTRDAILLCIGHNTGSEKLVRAAARLASRLGSVWHAVYVETPALHRLPEKKRRAILSALRLAQELGAETATLSDPAEEKAVVRYAREHNLGKIILGRPASRRWWRRETFADRLARIAPDLDQVLVALDEPPARTINNAPDNRSFKDKWRVQIQGCVVAAALCAVITLIAMQWLMAFDAANLVMLYLLGVVVVALFYGRWPSVVATVINVVSFDLFFIAPRGTLAVSDVQYLLTFAVMLTVGLVIGNLTAGVRYQARVARYREQRTRHLYEMSKALAVGRSPQDIAATSEQFIASTFHARSQVLLPDDNGKLQPLTHPQGMTPWDDAIAQWSFDKGLPAGAGTDTLPGVPYQILPLKSGEKTYGLVVVEPGNLRQLMIPEQQRLLETFTLLVANALERLTLTASEEQARMASEREQIRNALLAALSHDLRTPLTVLFGQAEILTLDLASEGSPHARQASEIRQHVLNTTRLVNNLLDMARIQSGGFNLKKEWLTLEEVVGSALQMLEPGLSSPINLSLPEPLTLIHVDGPLFERVLINLLENAVKYAGAQAEIGIDAHVEGENLQLDVWDNGPGLPPGQEQTIFDKFARGNKESAVPGVGLGLAICRAIVDVHGGTITAFNRPEGGACFRVTLPQQTAPELEEFHEDM.

Residues 1–400 (MNNEPLRPDP…FKDKWRVQIQ (400 aa)) are Cytoplasmic-facing. A helical transmembrane segment spans residues 401 to 423 (GCVVAAALCAVITLIAMQWLMAF). Over 424 to 427 (DAAN) the chain is Periplasmic. The chain crosses the membrane as a helical span at residues 428 to 444 (LVMLYLLGVVVVALFYG). A topological domain (cytoplasmic) is located at residue R445. The chain crosses the membrane as a helical span at residues 446–466 (WPSVVATVINVVSFDLFFIAP). Topologically, residues 467–474 (RGTLAVSD) are periplasmic. Residues 475–498 (VQYLLTFAVMLTVGLVIGNLTAGV) form a helical membrane-spanning segment. Residues 499-894 (RYQARVARYR…PELEEFHEDM (396 aa)) lie on the Cytoplasmic side of the membrane. The Histidine kinase domain occupies 670 to 883 (ALSHDLRTPL…CFRVTLPQQT (214 aa)). H673 carries the post-translational modification Phosphohistidine; by autocatalysis.

It in the central section; belongs to the universal stress protein A family.

It is found in the cell inner membrane. The enzyme catalyses ATP + protein L-histidine = ADP + protein N-phospho-L-histidine.. Member of the two-component regulatory system KdpD/KdpE involved in the regulation of the kdp operon. KdpD may function as a membrane-associated protein kinase that phosphorylates KdpE in response to environmental signals. This Escherichia coli (strain K12) protein is Sensor protein KdpD (kdpD).